Here is a 226-residue protein sequence, read N- to C-terminus: Thiopurine S-methyltransferase (226 aa).

Trp-16, Met-51, Glu-72, and Arg-131 together coordinate S-adenosyl-L-methionine.

It belongs to the class I-like SAM-binding methyltransferase superfamily. TPMT family.

Its subcellular location is the cytoplasm. It catalyses the reaction S-adenosyl-L-methionine + a thiopurine = S-adenosyl-L-homocysteine + a thiopurine S-methylether.. The polypeptide is Thiopurine S-methyltransferase (Francisella tularensis subsp. novicida (strain U112)).